Consider the following 1077-residue polypeptide: Teashirt homolog 1 (1077 aa).

Disordered regions lie at residues Met1 to Pro109, Ser139 to Ser195, and Gly269 to Glu298. Over residues Ile26–Leu36 the composition is skewed to acidic residues. Composition is skewed to polar residues over residues Gln57–Asp71 and Ser139–Glu152. The segment covering Pro164 to Ser195 has biased composition (low complexity). 2 C2H2-type zinc fingers span residues Phe246 to His270 and Leu307 to His331. Basic and acidic residues predominate over residues Gly269 to Lys284. The segment at Leu416 to His440 adopts a C2H2-type 3; atypical zinc-finger fold. Disordered stretches follow at residues Ser467 to Leu549 and Thr647 to Lys720. 3 stretches are compositionally biased toward basic and acidic residues: residues Ser496 to Glu528, Thr647 to Ser665, and Lys675 to Leu708. At Ser765 the chain carries Phosphoserine. Residues Thr848–Glu873 are disordered. A compositionally biased stretch (polar residues) spans Pro853 to Ser862. The homeobox; atypical DNA-binding region spans Arg885–Gly955. 2 C2H2-type zinc fingers span residues Phe970–His992 and Phe1037–His1060.

Belongs to the teashirt C2H2-type zinc-finger protein family. As to quaternary structure, interacts (via homeobox domain) with APBB1 (via PID domain 1). In terms of tissue distribution, expressed in brain; strongly reduced in post-mortem elderly subjects with Alzheimer disease.

Its subcellular location is the nucleus. Functionally, probable transcriptional regulator involved in developmental processes. May act as a transcriptional repressor (Potential). In Homo sapiens (Human), this protein is Teashirt homolog 1 (TSHZ1).